Consider the following 55-residue polypeptide: Ferredoxin (55 aa).

4Fe-4S ferredoxin-type domains are found at residues 2 to 27 (YFIT…SPGD) and 28 to 55 (SVYV…PQQK). [4Fe-4S] cluster-binding residues include Cys8, Cys11, Cys14, Cys18, Cys37, Cys40, Cys43, and Cys47.

Requires [4Fe-4S] cluster as cofactor.

Its function is as follows. Ferredoxins are iron-sulfur proteins that transfer electrons in a wide variety of metabolic reactions. In Acetivibrio thermocellus (Hungateiclostridium thermocellum), this protein is Ferredoxin.